We begin with the raw amino-acid sequence, 231 residues long: 2-C-methyl-D-erythritol 4-phosphate cytidylyltransferase (231 aa).

Belongs to the IspD/TarI cytidylyltransferase family. IspD subfamily.

It carries out the reaction 2-C-methyl-D-erythritol 4-phosphate + CTP + H(+) = 4-CDP-2-C-methyl-D-erythritol + diphosphate. It participates in isoprenoid biosynthesis; isopentenyl diphosphate biosynthesis via DXP pathway; isopentenyl diphosphate from 1-deoxy-D-xylulose 5-phosphate: step 2/6. Catalyzes the formation of 4-diphosphocytidyl-2-C-methyl-D-erythritol from CTP and 2-C-methyl-D-erythritol 4-phosphate (MEP). This Mycobacterium bovis (strain BCG / Pasteur 1173P2) protein is 2-C-methyl-D-erythritol 4-phosphate cytidylyltransferase.